Consider the following 722-residue polypeptide: Methionine--tRNA ligase (722 aa).

The 'HIGH' region signature appears at 11–21; that stretch reads PYANGPIHAGH. Residues Cys143, Cys146, Cys156, and Cys159 each coordinate Zn(2+). Residues 344–348 carry the 'KMSKS' region motif; sequence KFSTS. Position 347 (Thr347) interacts with ATP. Positions 622–722 constitute a tRNA-binding domain; the sequence is DFAKLDLRVG…KEVKLGAKVR (101 aa).

Belongs to the class-I aminoacyl-tRNA synthetase family. MetG type 1 subfamily. In terms of assembly, homodimer. It depends on Zn(2+) as a cofactor.

It localises to the cytoplasm. It catalyses the reaction tRNA(Met) + L-methionine + ATP = L-methionyl-tRNA(Met) + AMP + diphosphate. Functionally, is required not only for elongation of protein synthesis but also for the initiation of all mRNA translation through initiator tRNA(fMet) aminoacylation. In Pyrococcus abyssi (strain GE5 / Orsay), this protein is Methionine--tRNA ligase.